The chain runs to 292 residues: Elongation factor Ts (292 aa).

Positions 80–83 (TDFV) are involved in Mg(2+) ion dislocation from EF-Tu.

Belongs to the EF-Ts family.

The protein localises to the cytoplasm. Its function is as follows. Associates with the EF-Tu.GDP complex and induces the exchange of GDP to GTP. It remains bound to the aminoacyl-tRNA.EF-Tu.GTP complex up to the GTP hydrolysis stage on the ribosome. The sequence is that of Elongation factor Ts from Pediococcus pentosaceus (strain ATCC 25745 / CCUG 21536 / LMG 10740 / 183-1w).